Here is an 809-residue protein sequence, read N- to C-terminus: Zygotic DNA replication licensing factor mcm3 (809 aa).

An MCM domain is found at 297 to 504 (IFEQLSRSLA…QDREISDHVL (208 aa)). ATP is bound at residue 347-354 (GDPSVAKS). Residues 479–482 (SRFD) carry the Arginine finger motif. The segment at 664–741 (KKRRRRDEDS…TDSSAKPGLS (78 aa)) is disordered. Positions 696-705 (AQEGESHDPY) are enriched in basic and acidic residues.

Belongs to the MCM family. In terms of assembly, component of the mcm2-7 complex (RLF-M). The complex forms a toroidal hexameric ring with the proposed subunit order mcm2-mcm6-mcm4-mcm7-mcm3-mcm5. Component of the CMG helicase complex, composed of the mcm2-7 complex, the GINS complex and cdc45.

It is found in the nucleus. It localises to the chromosome. It carries out the reaction ATP + H2O = ADP + phosphate + H(+). Functionally, acts as a component of the MCM2-7 complex (MCM complex) which is the putative replicative helicase essential for 'once per cell cycle' DNA replication initiation and elongation in eukaryotic cells. The active ATPase sites in the MCM2-7 ring are formed through the interaction surfaces of two neighboring subunits such that a critical structure of a conserved arginine finger motif is provided in trans relative to the ATP-binding site of the Walker A box of the adjacent subunit. The six ATPase active sites, however, are likely to contribute differentially to the complex helicase activity. The existence of maternal and zygotic forms of mcm3 and mcm6 suggests that specific forms of mcm2-7 complexes may be used during different stages of development. In Xenopus tropicalis (Western clawed frog), this protein is Zygotic DNA replication licensing factor mcm3 (zmcm3).